Consider the following 281-residue polypeptide: ATP synthase gamma chain (281 aa).

This sequence belongs to the ATPase gamma chain family. As to quaternary structure, F-type ATPases have 2 components, CF(1) - the catalytic core - and CF(0) - the membrane proton channel. CF(1) has five subunits: alpha(3), beta(3), gamma(1), delta(1), epsilon(1). CF(0) has three main subunits: a, b and c.

It localises to the cell inner membrane. Produces ATP from ADP in the presence of a proton gradient across the membrane. The gamma chain is believed to be important in regulating ATPase activity and the flow of protons through the CF(0) complex. In Ehrlichia canis (strain Jake), this protein is ATP synthase gamma chain.